The following is a 142-amino-acid chain: Matrix protein (142 aa).

In terms of assembly, homooligomer. Forms homotetramers. Interacts with phosphoprotein P. Binds to ssRNA.

The protein resides in the virion. The protein localises to the host cytoplasm. It is found in the host cell membrane. Its subcellular location is the host nucleus. Functionally, plays a crucial role in virion assembly and budding. The sequence is that of Matrix protein (M) from Borna disease virus (strain V) (BDV).